Reading from the N-terminus, the 207-residue chain is ATP-dependent dethiobiotin synthetase BioD (207 aa).

11–16 (DVGKTF) contributes to the ATP binding site. Thr15 contributes to the Mg(2+) binding site. Lys31 is a catalytic residue. A substrate-binding site is contributed by Ser35. ATP contacts are provided by residues Asp42, 95 to 98 (ETSG), and 155 to 156 (NQ). Mg(2+) is bound by residues Asp42 and Glu95.

It belongs to the dethiobiotin synthetase family. In terms of assembly, homodimer. Mg(2+) is required as a cofactor.

The protein localises to the cytoplasm. The catalysed reaction is (7R,8S)-7,8-diammoniononanoate + CO2 + ATP = (4R,5S)-dethiobiotin + ADP + phosphate + 3 H(+). It participates in cofactor biosynthesis; biotin biosynthesis; biotin from 7,8-diaminononanoate: step 1/2. Functionally, catalyzes a mechanistically unusual reaction, the ATP-dependent insertion of CO2 between the N7 and N8 nitrogen atoms of 7,8-diaminopelargonic acid (DAPA, also called 7,8-diammoniononanoate) to form a ureido ring. The protein is ATP-dependent dethiobiotin synthetase BioD of Chlamydia abortus (strain DSM 27085 / S26/3) (Chlamydophila abortus).